Here is a 201-residue protein sequence, read N- to C-terminus: MENEEGKREMTKKQSSRFKSICVFCGSSNGNKASYQDAAIDLAKELVMRKIDLVYGGGSIGLMGLVSQAVHDGGRHVIGVIPKLLMLQELTGETVGEVKEVADMHQRKAVMAKHSDAFITLPGGYGTLEELLEVITWAQLGIHDKPVGLLNVDGYYDALLLFIDKAVEEGFILPTARHIIVSAPTARELFIKLEEYVPQHK.

Substrate is bound by residues glutamate 89, 107-108 (RK), 124-130 (GYGTLEE), and threonine 136.

The protein belongs to the LOG family.

The enzyme catalyses N(6)-(dimethylallyl)adenosine 5'-phosphate + H2O = N(6)-dimethylallyladenine + D-ribose 5-phosphate. The catalysed reaction is 9-ribosyl-trans-zeatin 5'-phosphate + H2O = trans-zeatin + D-ribose 5-phosphate. Its function is as follows. Cytokinin-activating enzyme working in the direct activation pathway. Phosphoribohydrolase that converts inactive cytokinin nucleotides to the biologically active free-base forms. In Arabidopsis thaliana (Mouse-ear cress), this protein is Probable cytokinin riboside 5'-monophosphate phosphoribohydrolase LOG6 (LOG6).